The primary structure comprises 833 residues: Ribosome biogenesis protein BOP1 homolog (833 aa).

Positions 20–202 are disordered; it reads NKKSEPIAVS…DSDDSSEDES (183 aa). Residues 36 to 56 are compositionally biased toward low complexity; that stretch reads SKPTTTATTTVSKSPVSTITT. Acidic residues-rich tracts occupy residues 90–111 and 136–150; these read SEDD…EDVE and EAEE…EDDS. Residues 154-170 are compositionally biased toward low complexity; sequence SSKSSSSTTTTTTTTKK. Positions 182-192 are enriched in polar residues; sequence KQWTNDPNQFY. Positions 193-202 are enriched in acidic residues; the sequence is DSDDSSEDES. WD repeat units follow at residues 331-370, 488-527, and 529-569; these read TKAI…KEKT, GHKA…CLYS, and EVES…TQTE. Positions 568-592 are disordered; it reads TEHSPETEKILTKPPTDSSTEQQQN. Residues 582–592 are compositionally biased toward polar residues; it reads PTDSSTEQQQN. WD repeat units lie at residues 618-660, 663-701, 704-743, 747-786, and 802-833; these read HHPF…TQSP, KSKT…LIKK, TGCR…RPYK, YHKM…DLLQ, and INDL…LYTN.

It belongs to the WD repeat BOP1/ERB1 family.

It is found in the nucleus. Its subcellular location is the nucleolus. The protein resides in the nucleoplasm. Its function is as follows. Required for maturation of ribosomal RNAs and formation of the large ribosomal subunit. The polypeptide is Ribosome biogenesis protein BOP1 homolog (Dictyostelium discoideum (Social amoeba)).